The sequence spans 330 residues: tRNA U34 carboxymethyltransferase (330 aa).

Carboxy-S-adenosyl-L-methionine is bound by residues lysine 91, tryptophan 105, lysine 110, glycine 130, 152–154 (DPS), 181–182 (IE), methionine 196, tyrosine 200, and arginine 315.

This sequence belongs to the class I-like SAM-binding methyltransferase superfamily. CmoB family. Homotetramer.

It carries out the reaction carboxy-S-adenosyl-L-methionine + 5-hydroxyuridine(34) in tRNA = 5-carboxymethoxyuridine(34) in tRNA + S-adenosyl-L-homocysteine + H(+). In terms of biological role, catalyzes carboxymethyl transfer from carboxy-S-adenosyl-L-methionine (Cx-SAM) to 5-hydroxyuridine (ho5U) to form 5-carboxymethoxyuridine (cmo5U) at position 34 in tRNAs. This Shewanella sediminis (strain HAW-EB3) protein is tRNA U34 carboxymethyltransferase.